The sequence spans 939 residues: Intimin (939 aa).

A signal peptide spans 1–41; the sequence is MITHGFYARTRHKHKLKKTFIMLSAGLGLFFYVNQNSFANG. A peptidoglycan-binding region spans residues 40 to 153; the sequence is NGENYFKLGS…KLTKMSPDVT (114 aa). The tract at residues 40–153 is sufficient for homodimerization; that stretch reads NGENYFKLGS…KLTKMSPDVT (114 aa). The tract at residues 40–212 is required for periplasmic localization; the sequence is NGENYFKLGS…LQAWLQHYGT (173 aa). Positions 63–112 constitute a LysM domain; that stretch reads LFYTLKTGETVADLSKSQDINLSTIWSLNKHLYSSESEMMKAAPGQQIIL. An inverse autotransporter region spans residues 189–430; sequence DTALGIAGNQ…PQYVNELRTL (242 aa). Positions 402-411 are signature sequence for beta-barrel assembly machinery (BAM), which recognizes the unfolded beta-barrel in the periplasm; that stretch reads LYSMQFRYQF. 2 consecutive Big-1 domains span residues 560 to 653 and 660 to 751; these read VTDF…VIFV and ITEI…VEFF. Residues 750-939 are required and sufficient for interaction with intimin receptor Tir; it reads FFTTLTIDDG…ESNAYATCVK (190 aa). The tract at residues 842 to 939 is C-type lectin domain; the sequence is LIVPNMSKRV…ESNAYATCVK (98 aa). The interval 842–939 is intimin receptor Tir-binding; it reads LIVPNMSKRV…ESNAYATCVK (98 aa). An intrachain disulfide couples cysteine 860 to cysteine 937.

It belongs to the intimin/invasin family. In terms of assembly, homodimer. Interacts with Tir.

The protein resides in the cell outer membrane. Its function is as follows. An inverse autotransporter. Adhesin, which mediates attachment to the human intestine epithelial cells. Necessary for the production of attaching and effacing lesions on infected human tissue culture cells. Anchored to the outer membrane by binding to peptidoglycan (PGN) via its periplasmic domain, thus helping in receptor interactions during host invasion. PGN-binding may also aid in resisting mechanical and chemical stress during transit of the bacterium through the gastrointestinal tract of the host. Periplasmic domain binds purified E.coli PGN sacculi under acidic conditions in vitro and in vivo, but does not bind to chitin. Periplasmic domain binds PGN sacculi with an apparent dissociation constant (Kd) of 0.8 uM. No binding to PGN in vitro at normal physiological pH 7.4. This chain is Intimin, found in Escherichia coli O127:H6 (strain E2348/69 / EPEC).